The sequence spans 386 residues: Adiponectin receptor protein 2 (386 aa).

The interval 1 to 72 (MNEPAKHRLG…ECHDDNSQED (72 aa)) is disordered. The Cytoplasmic portion of the chain corresponds to 1-147 (MNEPAKHRLG…SIFRIHTETG (147 aa)). Positions 15–31 (PEPDIRLRKGHQLDDTR) are enriched in basic and acidic residues. Positions 58-72 (SPEEPECHDDNSQED) are enriched in acidic residues. A helical transmembrane segment spans residues 148-168 (NIWTHLLGCVFFLCLGIFYMF). Residues 169–181 (RPNISFVAPLQEK) are Extracellular-facing. Residues 182–202 (VVFGLFFLGAILCLSFSWLFH) traverse the membrane as a helical segment. Residue His202 coordinates Zn(2+). Residues 203-213 (TVYCHSEGVSR) lie on the Cytoplasmic side of the membrane. The chain crosses the membrane as a helical span at residues 214–234 (LFSKLDYSGIALLIMGSFVPW). The Extracellular portion of the chain corresponds to 235–245 (LYYSFYCNPQP). A helical transmembrane segment spans residues 246–266 (CFIYLIVICVLGIAAIIVSQW). At 267–273 (DMFATPQ) the chain is on the cytoplasmic side. A helical membrane pass occupies residues 274–294 (YRGVRAGVFVGLGLSGIIPTL). Residues 295-309 (HYVISEGFLKAATIG) lie on the Extracellular side of the membrane. A helical membrane pass occupies residues 310 to 330 (QIGWLMLMASLYITGAALYAA). The Cytoplasmic segment spans residues 331–348 (RIPERFFPGKCDIWFHSH). Residues His348 and His352 each contribute to the Zn(2+) site. Residues 349–369 (QLFHIFVVAGAFVHFHGVSNL) traverse the membrane as a helical segment. Over 370–386 (QEFRFMIGGGCTEEDAL) the chain is Extracellular.

The protein belongs to the ADIPOR family. As to quaternary structure, may form homooligomers and heterooligomers with ADIPOR1. Interacts with APPL2 (via BAR domain); ADIPOQ dissociates this interaction. As to expression, detected in liver and quadriceps muscle (at protein level). Highly expressed in liver. Highly expressed in white adipose tissue, and at intermediate levels in brown adipose tissue. Expressed at intermediate level in heart, kidney, lung and skeletal muscle. Weakly expressed in brain, spleen and testis.

It localises to the cell membrane. Receptor for ADIPOQ, an essential hormone secreted by adipocytes that regulates glucose and lipid metabolism. Required for normal body fat and glucose homeostasis. ADIPOQ-binding activates a signaling cascade that leads to increased PPARA activity, and ultimately to increased fatty acid oxidation and glucose uptake. Has intermediate affinity for globular and full-length adiponectin. Required for normal revascularization after chronic ischemia caused by severing of blood vessels. In Mus musculus (Mouse), this protein is Adiponectin receptor protein 2.